The chain runs to 901 residues: Protein translocase subunit SecA (901 aa).

ATP is bound by residues Gln87, 105 to 109 (GEGKT), and Asp512. A disordered region spans residues 853-901 (QMQQLSHQTDENEAAEAIAAQTGDRKVGRNDPCPCGSGKKYKSCHGRLS). Zn(2+)-binding residues include Cys885, Cys887, Cys896, and His897. Residues 891–901 (KKYKSCHGRLS) are compositionally biased toward basic residues.

The protein belongs to the SecA family. Monomer and homodimer. Part of the essential Sec protein translocation apparatus which comprises SecA, SecYEG and auxiliary proteins SecDF-YajC and YidC. Zn(2+) is required as a cofactor.

It is found in the cell inner membrane. Its subcellular location is the cytoplasm. The enzyme catalyses ATP + H2O + cellular proteinSide 1 = ADP + phosphate + cellular proteinSide 2.. Functionally, part of the Sec protein translocase complex. Interacts with the SecYEG preprotein conducting channel. Has a central role in coupling the hydrolysis of ATP to the transfer of proteins into and across the cell membrane, serving both as a receptor for the preprotein-SecB complex and as an ATP-driven molecular motor driving the stepwise translocation of polypeptide chains across the membrane. In Enterobacter sp. (strain 638), this protein is Protein translocase subunit SecA.